The primary structure comprises 453 residues: Bifunctional protein GlmU (453 aa).

Residues 1-227 (MTQDIVILAA…EAEVAGVNDR (227 aa)) form a pyrophosphorylase region. Residues 8–11 (LAAG), lysine 22, glutamine 73, 78–79 (GT), 100–102 (YGD), glycine 137, glutamate 152, asparagine 167, and asparagine 225 each bind UDP-N-acetyl-alpha-D-glucosamine. Position 102 (aspartate 102) interacts with Mg(2+). Asparagine 225 provides a ligand contact to Mg(2+). Residues 228–248 (VQLAALERELQNQQAVSLMQN) form a linker region. The segment at 249–453 (GATLLDPSRI…KDNWPRPIKK (205 aa)) is N-acetyltransferase. Positions 331 and 349 each coordinate UDP-N-acetyl-alpha-D-glucosamine. Histidine 361 acts as the Proton acceptor in catalysis. Tyrosine 364 and asparagine 375 together coordinate UDP-N-acetyl-alpha-D-glucosamine. Residues alanine 378, 384 to 385 (NY), serine 403, alanine 421, and arginine 438 contribute to the acetyl-CoA site.

It in the N-terminal section; belongs to the N-acetylglucosamine-1-phosphate uridyltransferase family. This sequence in the C-terminal section; belongs to the transferase hexapeptide repeat family. As to quaternary structure, homotrimer. It depends on Mg(2+) as a cofactor.

It localises to the cytoplasm. The catalysed reaction is alpha-D-glucosamine 1-phosphate + acetyl-CoA = N-acetyl-alpha-D-glucosamine 1-phosphate + CoA + H(+). It catalyses the reaction N-acetyl-alpha-D-glucosamine 1-phosphate + UTP + H(+) = UDP-N-acetyl-alpha-D-glucosamine + diphosphate. It participates in nucleotide-sugar biosynthesis; UDP-N-acetyl-alpha-D-glucosamine biosynthesis; N-acetyl-alpha-D-glucosamine 1-phosphate from alpha-D-glucosamine 6-phosphate (route II): step 2/2. The protein operates within nucleotide-sugar biosynthesis; UDP-N-acetyl-alpha-D-glucosamine biosynthesis; UDP-N-acetyl-alpha-D-glucosamine from N-acetyl-alpha-D-glucosamine 1-phosphate: step 1/1. Its pathway is bacterial outer membrane biogenesis; LPS lipid A biosynthesis. Catalyzes the last two sequential reactions in the de novo biosynthetic pathway for UDP-N-acetylglucosamine (UDP-GlcNAc). The C-terminal domain catalyzes the transfer of acetyl group from acetyl coenzyme A to glucosamine-1-phosphate (GlcN-1-P) to produce N-acetylglucosamine-1-phosphate (GlcNAc-1-P), which is converted into UDP-GlcNAc by the transfer of uridine 5-monophosphate (from uridine 5-triphosphate), a reaction catalyzed by the N-terminal domain. This is Bifunctional protein GlmU from Marinomonas sp. (strain MWYL1).